Reading from the N-terminus, the 61-residue chain is uncharacterized protein (61 aa).

Residues 10-61 (YEEENDNEDFEEEVELSREDLNQIINELAPFLIKLLTDLTELTQKKEESENE) adopt a coiled-coil conformation.

This is an uncharacterized protein from Acidianus bottle-shaped virus (isolate Italy/Pozzuoli) (ABV).